The sequence spans 201 residues: Akirin-2 (201 aa).

2 positions are modified to phosphoserine: S18 and S21. A Nuclear localization signal motif is present at residues 22–27; sequence PKRRRC. A Phosphoserine modification is found at S55. Positions 198–201 match the SYVS motif motif; that stretch reads SYVS.

This sequence belongs to the akirin family. As to quaternary structure, homodimer. Interacts with IPO9; the interaction is direct. Associates with 20S and 26S proteasomes. Interacts with SMARCD1; promoting SWI/SNF complex recruitment. Interacts with NFKBIZ. Interacts with YWHAB. In terms of processing, polyubiquitinated. Polyubiquitination is dependent of UBR5 that extends pre-ubiquitinated AKIRIN2. Highly expressed in testis, cerebrum and cerebellum, and barely detectable in liver, heart, spleen and muscle. Also highly expressed in various tumor cells from hepatoma, glioblastoma and pheochromocytoma.

It is found in the nucleus. The protein localises to the cytoplasm. The protein resides in the membrane. Its function is as follows. Molecular adapter that acts as a bridge between a variety of multiprotein complexes, and which is involved in embryonic development, immunity, myogenesis and brain development. Plays a key role in nuclear protein degradation by promoting import of proteasomes into the nucleus: directly binds to fully assembled 20S proteasomes at one end and to nuclear import receptor IPO9 at the other end, bridging them together and mediating the import of pre-assembled proteasome complexes through the nuclear pore. Involved in innate immunity by regulating the production of interleukin-6 (IL6) downstream of Toll-like receptor (TLR): acts by bridging the NF-kappa-B inhibitor NFKBIZ and the SWI/SNF complex, leading to promote induction of IL6. Also involved in adaptive immunity by promoting B-cell activation. Involved in brain development: required for the survival and proliferation of cerebral cortical progenitor cells. Involved in myogenesis: required for skeletal muscle formation and skeletal development, possibly by regulating expression of muscle differentiation factors. Also plays a role in facilitating interdigital tissue regression during limb development. This is Akirin-2 from Rattus norvegicus (Rat).